The following is a 343-amino-acid chain: Putative kinase HI_0665 (343 aa).

Residue Asp-209 is the Proton acceptor of the active site.

This sequence belongs to the HipA Ser/Thr kinase family.

The protein is Putative kinase HI_0665 of Haemophilus influenzae (strain ATCC 51907 / DSM 11121 / KW20 / Rd).